We begin with the raw amino-acid sequence, 272 residues long: Tryptophan synthase alpha chain (272 aa).

Active-site proton acceptor residues include Glu-53 and Asp-64.

Belongs to the TrpA family. In terms of assembly, tetramer of two alpha and two beta chains.

It carries out the reaction (1S,2R)-1-C-(indol-3-yl)glycerol 3-phosphate + L-serine = D-glyceraldehyde 3-phosphate + L-tryptophan + H2O. It participates in amino-acid biosynthesis; L-tryptophan biosynthesis; L-tryptophan from chorismate: step 5/5. In terms of biological role, the alpha subunit is responsible for the aldol cleavage of indoleglycerol phosphate to indole and glyceraldehyde 3-phosphate. This Xanthomonas campestris pv. campestris (strain 8004) protein is Tryptophan synthase alpha chain.